We begin with the raw amino-acid sequence, 349 residues long: Dipeptide transport ATP-binding protein DppD (349 aa).

An ABC transporter domain is found at L7–L258. G43 to S50 serves as a coordination point for ATP.

It belongs to the ABC transporter superfamily. In terms of assembly, the complex is composed of two ATP-binding proteins (DppD and DppF), two transmembrane proteins (DppB and DppC) and a solute-binding protein (DppA).

The protein resides in the cell membrane. It carries out the reaction a dipeptide(out) + ATP + H2O = a dipeptide(in) + ADP + phosphate + H(+). Its function is as follows. Part of the ABC transporter DppABCDF involved in dipeptide transport. Responsible for energy coupling to the transport system. The chain is Dipeptide transport ATP-binding protein DppD from Lactococcus lactis subsp. cremoris (strain MG1363).